The sequence spans 427 residues: Gamma-glutamyl phosphate reductase (427 aa).

It belongs to the gamma-glutamyl phosphate reductase family.

The protein resides in the cytoplasm. It carries out the reaction L-glutamate 5-semialdehyde + phosphate + NADP(+) = L-glutamyl 5-phosphate + NADPH + H(+). It functions in the pathway amino-acid biosynthesis; L-proline biosynthesis; L-glutamate 5-semialdehyde from L-glutamate: step 2/2. Catalyzes the NADPH-dependent reduction of L-glutamate 5-phosphate into L-glutamate 5-semialdehyde and phosphate. The product spontaneously undergoes cyclization to form 1-pyrroline-5-carboxylate. The sequence is that of Gamma-glutamyl phosphate reductase from Brucella canis (strain ATCC 23365 / NCTC 10854 / RM-666).